The primary structure comprises 302 residues: Transmembrane protein 191 (302 aa).

A coiled-coil region spans residues 5 to 147 (QEQLLQLQKD…HLELAEAKFS (143 aa)). A disordered region spans residues 39 to 66 (LTGRLEELRERERSLQRRRSQASRAIRG). The span at 42–53 (RLEELRERERSL) shows a compositional bias: basic and acidic residues. Residues 242–262 (LQTLLLLPLGFLVLPLIYVVL) traverse the membrane as a helical segment.

This sequence belongs to the TMEM191 family.

The protein resides in the membrane. This chain is Transmembrane protein 191, found in Mus musculus (Mouse).